A 132-amino-acid chain; its full sequence is Transcription antitermination protein NusB (132 aa).

It belongs to the NusB family.

Involved in transcription antitermination. Required for transcription of ribosomal RNA (rRNA) genes. Binds specifically to the boxA antiterminator sequence of the ribosomal RNA (rrn) operons. This is Transcription antitermination protein NusB from Sulfurimonas denitrificans (strain ATCC 33889 / DSM 1251) (Thiomicrospira denitrificans (strain ATCC 33889 / DSM 1251)).